We begin with the raw amino-acid sequence, 419 residues long: Odorant receptor 56a (419 aa).

Residues 1–41 (MFKVKDLLLSPTTFEDPIFGTHLRYFQWYGYVASKDQNRPL) are Cytoplasmic-facing. The chain crosses the membrane as a helical span at residues 42 to 62 (LSLIRCTILTASIWLSCALML). The Extracellular portion of the chain corresponds to 63–76 (ARVFRGYENLNDGA). Residues 77–97 (TSYATAVQYFAVSIAMFNAYV) traverse the membrane as a helical segment. The Cytoplasmic portion of the chain corresponds to 98 to 137 (QRDKVISLLRVAHSDIQNLMHEADNREMELLVATQAYTRT). The chain crosses the membrane as a helical span at residues 138–158 (ITLLIWIPSVIAGLMAYSDCI). Topologically, residues 159–196 (YRSLFLPKSVFNVPAVRRGEEHPILLFQLFPFGELCDN) are extracellular. A helical membrane pass occupies residues 197 to 217 (FVVGYLGPWYALGLGITAIPL). The Cytoplasmic segment spans residues 218-292 (WHTFITCLMK…FVQELQYLIC (75 aa)). Residues 293–313 (VPVMADFIIFSVLICFLFFAL) form a helical membrane-spanning segment. The Extracellular segment spans residues 314 to 323 (TVGVPSKMDY). Residues 324-344 (FFMFIYLFVMAGILWIYHWHA) form a helical membrane-spanning segment. Residues 345–389 (TLIVECHDELSLAYFSCGWYNFEMPLQKMLVFMMMHAQRPMKMRA) are Cytoplasmic-facing. Residues 390-410 (LLVDLNLRTFIDIGRGAYSYF) form a helical membrane-spanning segment. The Extracellular portion of the chain corresponds to 411–419 (NLLRSSHLY).

This sequence belongs to the insect chemoreceptor superfamily. Heteromeric odorant receptor channel (TC 1.A.69) family. Or30a subfamily. In terms of assembly, interacts with Orco. Complexes exist early in the endomembrane system in olfactory sensory neurons (OSNs), coupling these complexes to the conserved ciliary trafficking pathway. In terms of tissue distribution, expressed in olfactory sensory neurons in the antenna.

Its subcellular location is the cell membrane. Odorant receptor which mediates acceptance or avoidance behavior, depending on its substrates. The odorant receptor repertoire encodes a large collection of odor stimuli that vary widely in identity, intensity, and duration. May form a complex with Orco to form odorant-sensing units, providing sensitive and prolonged odorant signaling and calcium permeability. Specific receptor for geosmin, a microbial odorant that constitutes an ecologically relevant stimulus that alerts flies to the presence of harmful microbes and induces avoidance behavior. In Drosophila melanogaster (Fruit fly), this protein is Odorant receptor 56a (Or56a).